Consider the following 122-residue polypeptide: uncharacterized protein (122 aa).

A run of 4 helical transmembrane segments spans residues 7 to 27, 29 to 49, 62 to 82, and 89 to 109; these read IVAI…IFCD, LVLA…LGWI, AITG…SKNP, and KEIF…YFGY.

It localises to the cell membrane. This is an uncharacterized protein from Methanocaldococcus jannaschii (strain ATCC 43067 / DSM 2661 / JAL-1 / JCM 10045 / NBRC 100440) (Methanococcus jannaschii).